A 196-amino-acid chain; its full sequence is Probable GTP-binding protein EngB (196 aa).

The 173-residue stretch at 24 to 196 folds into the EngB-type G domain; that stretch reads ELSEVALSGR…IWNLIEPYIS (173 aa). GTP is bound by residues 32 to 39, 59 to 63, 77 to 80, 144 to 147, and 176 to 178; these read GRSNVGKS, GKTQT, DVPG, TKED, and YSS. Residues Ser39 and Thr61 each coordinate Mg(2+).

This sequence belongs to the TRAFAC class TrmE-Era-EngA-EngB-Septin-like GTPase superfamily. EngB GTPase family. Mg(2+) is required as a cofactor.

Functionally, necessary for normal cell division and for the maintenance of normal septation. The chain is Probable GTP-binding protein EngB from Staphylococcus aureus (strain Mu3 / ATCC 700698).